Consider the following 347-residue polypeptide: Gas vesicle ATPase GvpN (347 aa).

Positions Met1–Thr50 are disordered. Positions Ser18 to Gln42 are enriched in basic and acidic residues. Gly91–Thr98 provides a ligand contact to ATP.

The protein belongs to the CbbQ/NirQ/NorQ/GpvN family. In terms of assembly, forms homodimers, a GvpN-GvpO heterodimer, interacts with GvpC and GvpL, might interact with GvpA.

It localises to the gas vesicle. It is found in the cytoplasm. The catalysed reaction is ATP + H2O = ADP + phosphate + H(+). Its function is as follows. An ATPase that functions in gas vesicle formation. A minor component of the gas vesicle, also found in soluble extracts. Gas vesicles are hollow, gas filled proteinaceous nanostructures found in some microorganisms. They allow positioning of halobacteria at the optimal depth for growth in the poorly aerated, shallow brine pools of their habitat. Expression of a 9.5 kb mc-vac DNA fragment containing 2 divergently transcribed regions (gvpD-gvpE-gvpF-gvpG-gvpH-gvpI-gvpJ-gvpK-gvpL-gvpM and gvpA-gvpC-gvpN-gvpO) allows H.volcanii to produce gas vesicles. The protein is Gas vesicle ATPase GvpN of Haloferax mediterranei (strain ATCC 33500 / DSM 1411 / JCM 8866 / NBRC 14739 / NCIMB 2177 / R-4) (Halobacterium mediterranei).